A 1040-amino-acid polypeptide reads, in one-letter code: Multidrug resistance protein MdtB (1040 aa).

A run of 12 helical transmembrane segments spans residues Phe-16–Ile-36, Leu-347–Ala-367, Ile-369–Leu-389, Leu-396–Ile-416, Ile-440–Phe-460, Phe-472–Pro-492, Trp-537–Ile-557, Leu-863–Ile-883, Phe-888–Ala-908, Ile-911–Val-931, Ile-968–Val-988, and Ile-998–Ile-1018.

This sequence belongs to the resistance-nodulation-cell division (RND) (TC 2.A.6) family. MdtB subfamily. Part of a tripartite efflux system composed of MdtA, MdtB and MdtC. MdtB forms a heteromultimer with MdtC.

The protein resides in the cell inner membrane. The chain is Multidrug resistance protein MdtB from Shigella boydii serotype 18 (strain CDC 3083-94 / BS512).